A 62-amino-acid polypeptide reads, in one-letter code: MSKELKLYVHRLYEYDYNTGTIKRKNKICPRCGSFMAFHKWPVPRWHCGKCGHTEFVREAKR.

4 residues coordinate Zn(2+): cysteine 29, cysteine 32, cysteine 48, and cysteine 51. The segment at 29-51 (CPRCGSFMAFHKWPVPRWHCGKC) adopts a C4-type zinc-finger fold.

It belongs to the eukaryotic ribosomal protein eS31 family. Part of the 30S ribosomal subunit. It depends on Zn(2+) as a cofactor.

This Hyperthermus butylicus (strain DSM 5456 / JCM 9403 / PLM1-5) protein is Small ribosomal subunit protein eS31.